The chain runs to 137 residues: Transcription antitermination protein NusB (137 aa).

This sequence belongs to the NusB family.

Involved in transcription antitermination. Required for transcription of ribosomal RNA (rRNA) genes. Binds specifically to the boxA antiterminator sequence of the ribosomal RNA (rrn) operons. The sequence is that of Transcription antitermination protein NusB from Proteus mirabilis (strain HI4320).